The chain runs to 601 residues: Terpenoid synthase 17 (601 aa).

The Mg(2+) site is built by N354, D358, N497, T501, and E505. A DDXXD motif; degenerate motif is present at residues 354–358 (NDTCD).

This sequence belongs to the terpene synthase family. Tpsa subfamily. Requires Mg(2+) as cofactor. The cofactor is Mn(2+). In terms of tissue distribution, expressed exclusively in flowers.

It is found in the cytoplasm. The protein operates within secondary metabolite biosynthesis; terpenoid biosynthesis. This Arabidopsis thaliana (Mouse-ear cress) protein is Terpenoid synthase 17 (TPS17).